The sequence spans 511 residues: Piperic acid synthase CYP719A37 (511 aa).

A helical membrane pass occupies residues 7–27; that stretch reads VDPALFSAFVSIIFFFLGMFL. C455 contacts heme.

Belongs to the cytochrome P450 family. The cofactor is heme. In terms of tissue distribution, specifically expressed in immature fruits and roots. Barely detectable in young leaves and flowering spadices.

The protein localises to the membrane. The protein resides in the endoplasmic reticulum membrane. It catalyses the reaction (E,E)-feruperate + reduced [NADPH--hemoprotein reductase] + O2 = (E,E)-piperate + oxidized [NADPH--hemoprotein reductase] + 2 H2O + H(+). It participates in aromatic compound metabolism. In terms of biological role, cytochrome P450 monooxygenase involved in the biosynthesis of aromatic piperamides natural products such as piperine (1-piperoyl-piperidine), the pungent principle contributing, together with several terpenoids, to the aromatic properties of black pepper fruits, and displaying numerous pharmacological activities such as antiproliferative, antitumor, antiangiogenesis, antioxidant, antidiabetic, antiobesity, cardioprotective, antimicrobial, antiaging, and immunomodulatory effects. Catalyzes the conversion of feruperic acid (5-(4-hydroxy-3-methoxyphenyl)-2,4-pentadienoic acid) to piperic acid. Inactive toward ferulic acid and feruperine. The polypeptide is Piperic acid synthase CYP719A37 (Piper nigrum (Black pepper)).